Consider the following 283-residue polypeptide: MESISLKAHAKINLSLDVIGKRQDGYHEVRMIMQSIALHDEVVIEKRAAGIKVECDKPWVPEGSGNIAYKAANLMMERYKIESGVGIKILKRIPVAAGLAGGSADAAAVIKGMNELFNLNADEAELMDIGKQVGADVPFCIKGGTMLSEGIGEKLTKIPSFEGVNIVLVKPKVGVSTAWVYSNLKLNEISSRPDTELLIKAIYEKNIGCLAQNMTNVLETVTIKKYGVINDIKNELLRLGALGSMMSGSGPSVFGIFENEKQACLAYEGLKNSEWECFVTQTI.

Lys11 is an active-site residue. 94-104 (PVAAGLAGGSA) serves as a coordination point for ATP. The active site involves Asp136.

The protein belongs to the GHMP kinase family. IspE subfamily.

The catalysed reaction is 4-CDP-2-C-methyl-D-erythritol + ATP = 4-CDP-2-C-methyl-D-erythritol 2-phosphate + ADP + H(+). It participates in isoprenoid biosynthesis; isopentenyl diphosphate biosynthesis via DXP pathway; isopentenyl diphosphate from 1-deoxy-D-xylulose 5-phosphate: step 3/6. Catalyzes the phosphorylation of the position 2 hydroxy group of 4-diphosphocytidyl-2C-methyl-D-erythritol. The polypeptide is 4-diphosphocytidyl-2-C-methyl-D-erythritol kinase (Acetivibrio thermocellus (strain ATCC 27405 / DSM 1237 / JCM 9322 / NBRC 103400 / NCIMB 10682 / NRRL B-4536 / VPI 7372) (Clostridium thermocellum)).